A 498-amino-acid chain; its full sequence is 4-aminobutyrate aminotransferase (498 aa).

Residue 164–165 (GS) participates in pyridoxal 5'-phosphate binding. Substrate is bound at residue R222. K356 is subject to N6-(pyridoxal phosphate)lysine. T381 lines the pyridoxal 5'-phosphate pocket.

The protein belongs to the class-III pyridoxal-phosphate-dependent aminotransferase family. As to quaternary structure, homodimer. The cofactor is pyridoxal 5'-phosphate.

It localises to the cytoplasm. It catalyses the reaction 4-aminobutanoate + 2-oxoglutarate = succinate semialdehyde + L-glutamate. Functionally, deaminates gamma-aminobutyric acid (GABA) to succinate-semialdehyde, which in turn is converted to succinate by the succinate semialdehyde dehydrogenase. Required for the degradation of GABA, which is important for utilization of GABA as nitrogen source. This chain is 4-aminobutyrate aminotransferase (gatA), found in Emericella nidulans (strain FGSC A4 / ATCC 38163 / CBS 112.46 / NRRL 194 / M139) (Aspergillus nidulans).